The following is a 62-amino-acid chain: Conotoxin TsMLCL-02 (62 aa).

The N-terminal stretch at 1 to 19 (MLCLPVFIILLLLASPAAP) is a signal peptide. The propeptide occupies 20-54 (NPLERRIQSDLIRAALEDADMKTEKGILSSIMGTL).

It belongs to the conotoxin T superfamily. In terms of tissue distribution, expressed by the venom duct.

It localises to the secreted. The polypeptide is Conotoxin TsMLCL-02 (Conus tessulatus (Tessellate cone)).